A 1392-amino-acid polypeptide reads, in one-letter code: MNYSFTEKKRIRKSFAKRENVLEVPFLLATQIDSYAKFLQLENAFDKRTDDGLQAAFNSIFPIVSHNGYARLEFVYYTLGEPLFDIPECQLRGITYAAPLRARIRLVILDKEASKPTVKEVRENEVYMGEIPLMTPSGSFVINGTERVIVSQLHRSPGVFFEHDKGKTHSSGKLLFSARIIPYRGSWLDFEFDPKDLLYFRIDRRRKMPVTILLKALGYNNEQILDIFYDKETFYLSSNGVQTDLVAGRLKGETAKVDILDKEGNVLVAKGKRITAKNIRDITNAGLTRLDVEQESLLGKALAADLIDSETGEVLASANDEITEELLAKFDINGVKEITTLYINELDQGAYISNTLRTDETAGRQAARVAIYRMMRPGEPPTEEAVEQLFNRLFFSEDSYDLSRVGRMKFNTRTYEQKLSEAQQNSWYGRLLNETFAGAADKGGYVLSVEDIVASIATLVELRNGHGEVDDIDHLGNRRVRSVGELTENQFRSGLARVERAVKERLNQAESENLMPHDLINAKPVSAAIKEFFGSSQLSQFMDQTNPLSEVTHKRRVSALGPGGLTRERAGFEVRDVHPTHYGRVCPIETPEGPNIGLINSLSVYARTNDYGFLETPYRRVIDGKVTEEIDYLSAIEEGRYVIAQANADLDSDGNLIGDLVTCREKGETIMATPDRVQYMDVATGQVVSVAASLIPFLEHDDANRALMGANMQRQAVPCLRPEKPMVGTGIERSVAVDSATAIVARRGGVVEYVDANRVVIRVHDDEATAGEVGVDIYNLVKFTRSNQSTNINQRPAVKAGDVLQRGDLVADGASTDLGELALGQNMTIAFMPWNGYNYEDSILISEKVAADDRYTSIHIEELNVVARDTKLGAEDITRDIPNLSERMQNRLDESGIVYIGAEVEAGDVLVGKVTPKGETQLTPEEKLLRAIFGEKASDVKDTSLRMPTGMSGTVIDVQVFTREGIQRDKRAQSIIDSELKRYRLDLNDQLRIFDNDAFDRIERMIVGQKANGGPMKLTKGSEITTEYLAGLPSRHDWFDIRLTDEDLAKQLELIKLSLQQKREEADELYEIKKKKLTQGDELQPGVQKMVKVFIAIKRRLQAGDKMAGRHGNKGVVSRILPVEDMPYMADGRPVDIVLNPLGVPSRMNIGQILEVHLGWAAKGIGERIDRMLKERRKAGELREFLNKLYNGSGKKEDLDSLTDEEIIELASNLRKGASFASPVFDGAKESEIREMLNLAYPSEDPEVEKLGFNDSKTQITLYDGRSGEAFDRKVTVGVMHYLKLHHLVDEKMHARSTGPYSLVTQQPLGGKAQFGGQRFGEMEVWALEAYGAAYTLQEMLTVKSDDVNGRTKMYENIVKGEHKIDAGMPESFNVLVKEIRSLGLDIDLERY.

The protein belongs to the RNA polymerase beta chain family. In terms of assembly, the RNAP catalytic core consists of 2 alpha, 1 beta, 1 beta' and 1 omega subunit. When a sigma factor is associated with the core the holoenzyme is formed, which can initiate transcription.

The catalysed reaction is RNA(n) + a ribonucleoside 5'-triphosphate = RNA(n+1) + diphosphate. Functionally, DNA-dependent RNA polymerase catalyzes the transcription of DNA into RNA using the four ribonucleoside triphosphates as substrates. The protein is DNA-directed RNA polymerase subunit beta of Neisseria gonorrhoeae (strain ATCC 700825 / FA 1090).